The sequence spans 130 residues: Protachykinin-1 (130 aa).

The N-terminal stretch at 1-19 (MKILVAVAVIFFISTQLSA) is a signal peptide. A propeptide spanning residues 20–56 (EEIGANDDFNYWSDWSDSDQIKEEMPEPFEHLLQRIA) is cleaved from the precursor. Methionine amide is present on residues M68 and M107.

The protein belongs to the tachykinin family. Post-translationally, the substance P form is cleaved at Pro-59 by the prolyl endopeptidase FAP (seprase) activity (in vitro). Substance P is also cleaved and degraded by Angiotensin-converting enzyme (ACE) and neprilysin (MME).

The protein localises to the secreted. Functionally, tachykinins are active peptides which excite neurons, evoke behavioral responses, are potent vasodilators and secretagogues, and contract (directly or indirectly) many smooth muscles. This is Protachykinin-1 (TAC1) from Bos taurus (Bovine).